The primary structure comprises 551 residues: Glucans biosynthesis protein D (551 aa).

A signal peptide (tat-type signal) is located at residues methionine 1 to alanine 32.

It belongs to the OpgD/OpgG family. In terms of processing, predicted to be exported by the Tat system. The position of the signal peptide cleavage has not been experimentally proven.

It is found in the periplasm. It functions in the pathway glycan metabolism; osmoregulated periplasmic glucan (OPG) biosynthesis. Its function is as follows. Probably involved in the control of the structural glucose backbone of osmoregulated periplasmic glucans (OPGs). The chain is Glucans biosynthesis protein D from Escherichia coli O127:H6 (strain E2348/69 / EPEC).